The chain runs to 221 residues: Probable GTP-binding protein EngB (221 aa).

The region spanning 32 to 205 (GIPQIAFAGR…RKIVDSLITT (174 aa)) is the EngB-type G domain. GTP-binding positions include 40 to 47 (GRSNAGKS), 67 to 71 (GKTKL), 85 to 88 (DLPG), 152 to 155 (TKID), and 184 to 186 (VSN). Residues Ser-47 and Thr-69 each coordinate Mg(2+).

Belongs to the TRAFAC class TrmE-Era-EngA-EngB-Septin-like GTPase superfamily. EngB GTPase family. It depends on Mg(2+) as a cofactor.

Its function is as follows. Necessary for normal cell division and for the maintenance of normal septation. The polypeptide is Probable GTP-binding protein EngB (Leptospira borgpetersenii serovar Hardjo-bovis (strain JB197)).